We begin with the raw amino-acid sequence, 88 residues long: Protein MATERNALLY EXPRESSED GENE 1 (88 aa).

A signal peptide spans 1–27; it reads MEYKKRVDALVFFSLLLLGYFAAHAHG. Asparagine 36 carries N-linked (GlcNAc...) asparagine glycosylation. 2 disulfides stabilise this stretch: cysteine 65–cysteine 87 and cysteine 68–cysteine 76.

This sequence belongs to the MEG family. Glycosylated. As to expression, expressed exclusively in endosperm. Found in basal endosperm transfer cells.

The protein resides in the secreted. Its subcellular location is the cell wall. It is found in the cell membrane. It localises to the extracellular space. The protein localises to the extracellular matrix. Regulates maternal nutrient uptake, sucrose partitioning, and seed biomass yield. Necessary and sufficient for the establishment and differentiation of the endosperm nutrient transfer cells located at the mother:seed interface. Exclusive expression of the maternal allele at the early stages of endosperm development. The maternal allele is hypomethylated. At later stages, expression becomes biallelic. Regulated by the transcription factor MRP1. The sequence is that of Protein MATERNALLY EXPRESSED GENE 1 (MEG1) from Zea mays (Maize).